Here is a 155-residue protein sequence, read N- to C-terminus: 6,7-dimethyl-8-ribityllumazine synthase (155 aa).

5-amino-6-(D-ribitylamino)uracil contacts are provided by residues Phe-24, 58–60, and 82–84; these read AFE and VLI. A (2S)-2-hydroxy-3-oxobutyl phosphate-binding site is contributed by 87–88; sequence AT. His-90 functions as the Proton donor in the catalytic mechanism. Phe-115 provides a ligand contact to 5-amino-6-(D-ribitylamino)uracil. Position 129 (Arg-129) interacts with (2S)-2-hydroxy-3-oxobutyl phosphate.

It belongs to the DMRL synthase family.

The catalysed reaction is (2S)-2-hydroxy-3-oxobutyl phosphate + 5-amino-6-(D-ribitylamino)uracil = 6,7-dimethyl-8-(1-D-ribityl)lumazine + phosphate + 2 H2O + H(+). The protein operates within cofactor biosynthesis; riboflavin biosynthesis; riboflavin from 2-hydroxy-3-oxobutyl phosphate and 5-amino-6-(D-ribitylamino)uracil: step 1/2. Its function is as follows. Catalyzes the formation of 6,7-dimethyl-8-ribityllumazine by condensation of 5-amino-6-(D-ribitylamino)uracil with 3,4-dihydroxy-2-butanone 4-phosphate. This is the penultimate step in the biosynthesis of riboflavin. The protein is 6,7-dimethyl-8-ribityllumazine synthase of Chloroherpeton thalassium (strain ATCC 35110 / GB-78).